We begin with the raw amino-acid sequence, 345 residues long: Flap endonuclease 1 (345 aa).

Residues 1 to 103 are N-domain; sequence MGIKQLSKLL…KELEKRKERR (103 aa). Mg(2+) is bound at residue Asp34. Arg47 and Arg69 together coordinate DNA. 5 residues coordinate Mg(2+): Asp85, Glu157, Glu159, Asp178, and Asp180. The segment at 121-252 is I-domain; it reads LMEMYDKRKT…KKALGLIKKH (132 aa). Glu157 contributes to the DNA binding site. DNA contacts are provided by Gly230 and Asp232. Asp232 provides a ligand contact to Mg(2+). An interaction with PCNA region spans residues 333 to 341; it reads TQGRLDCFI.

The protein belongs to the XPG/RAD2 endonuclease family. FEN1 subfamily. In terms of assembly, interacts with PCNA. Three molecules of FEN1 bind to one PCNA trimer with each molecule binding to one PCNA monomer. PCNA stimulates the nuclease activity without altering cleavage specificity. Requires Mg(2+) as cofactor. In terms of processing, phosphorylated. Phosphorylation upon DNA damage induces relocalization to the nuclear plasma.

Its subcellular location is the nucleus. The protein resides in the nucleolus. The protein localises to the nucleoplasm. It localises to the mitochondrion. Its function is as follows. Structure-specific nuclease with 5'-flap endonuclease and 5'-3' exonuclease activities involved in DNA replication and repair. During DNA replication, cleaves the 5'-overhanging flap structure that is generated by displacement synthesis when DNA polymerase encounters the 5'-end of a downstream Okazaki fragment. It enters the flap from the 5'-end and then tracks to cleave the flap base, leaving a nick for ligation. Also involved in the long patch base excision repair (LP-BER) pathway, by cleaving within the apurinic/apyrimidinic (AP) site-terminated flap. Acts as a genome stabilization factor that prevents flaps from equilibrating into structures that lead to duplications and deletions. Also possesses 5'-3' exonuclease activity on nicked or gapped double-stranded DNA, and exhibits RNase H activity. Also involved in replication and repair of rDNA and in repairing mitochondrial DNA. The protein is Flap endonuclease 1 of Encephalitozoon cuniculi (strain GB-M1) (Microsporidian parasite).